The chain runs to 87 residues: MERKWALLLFLGMVTLVSCGLREKHVQKLVALIPNDTVRSILKAVVHKAAKTQFGCPAYEGYCNNHCQDIKRKDGECHGFKCKCAKD.

An N-terminal signal peptide occupies residues 1 to 19; the sequence is MERKWALLLFLGMVTLVSC. Positions 20 to 27 are excised as a propeptide; sequence GLREKHVQ. The 35-residue stretch at 53-87 folds into the BetaSPN-type CS-alpha/beta domain; the sequence is QFGCPAYEGYCNNHCQDIKRKDGECHGFKCKCAKD. 3 cysteine pairs are disulfide-bonded: Cys56-Cys77, Cys63-Cys82, and Cys67-Cys84.

This sequence belongs to the long chain scorpion toxin family. Class 1 subfamily. Expressed by the venom gland.

Its subcellular location is the secreted. Its function is as follows. Inhibits voltage-gated potassium channel. The protein is Potassium channel toxin Ttr-beta-KTx of Tityus trivittatus (Argentinean scorpion).